A 226-amino-acid chain; its full sequence is Gap junction beta-2 protein (226 aa).

The stretch at 2 to 13 is an intramembrane region; it reads DWGALQTILGGV. The Cytoplasmic segment spans residues 14–20; sequence NKYSTSI. A helical transmembrane segment spans residues 21-40; that stretch reads GKIWLTVLFIFRIMILVVAA. Residues 41–73 lie on the Extracellular side of the membrane; sequence KEVWGDEQADFVCNTLQPGCKNVCYDHYFPISH. Positions 42, 45, and 47 each coordinate Ca(2+). Disulfide bonds link cysteine 53–cysteine 180, cysteine 60–cysteine 174, and cysteine 64–cysteine 169. Residues 74–94 form a helical membrane-spanning segment; that stretch reads IRLWALQLIFVSTPALLVAMH. Residues 95 to 135 lie on the Cytoplasmic side of the membrane; that stretch reads VAYRRHEKKRKFIKGEIKNEFKDIEEIKTQKVRIEGSLWWT. A helical transmembrane segment spans residues 136 to 156; that stretch reads YTSSIFFRVVFEAAFMYVFYV. Residues 157-189 are Extracellular-facing; it reads MYDGFSMQRLVKCNAWPCPNTVDCFVSRPTEKT. The chain crosses the membrane as a helical span at residues 190–210; it reads VFTVFMIAVSGICILLNVTEL. Residues 211–226 lie on the Cytoplasmic side of the membrane; it reads CYLLIRYCSGKSKKPV.

It belongs to the connexin family. Beta-type (group I) subfamily. As to quaternary structure, a hemichannel or connexon is composed of a hexamer of connexins. A functional gap junction is formed by the apposition of two hemichannels. Forms heteromeric channels with GJB4. Interacts with CNST.

It localises to the cell membrane. The protein resides in the cell junction. The protein localises to the gap junction. Structural component of gap junctions. Gap junctions are dodecameric channels that connect the cytoplasm of adjoining cells. They are formed by the docking of two hexameric hemichannels, one from each cell membrane. Small molecules and ions diffuse from one cell to a neighboring cell via the central pore. This chain is Gap junction beta-2 protein (GJB2), found in Macaca mulatta (Rhesus macaque).